A 252-amino-acid polypeptide reads, in one-letter code: 5'-nucleotidase SurE (252 aa).

Positions 8, 9, 40, and 93 each coordinate a divalent metal cation.

It belongs to the SurE nucleotidase family. Requires a divalent metal cation as cofactor.

The protein resides in the cytoplasm. The catalysed reaction is a ribonucleoside 5'-phosphate + H2O = a ribonucleoside + phosphate. Its function is as follows. Nucleotidase that shows phosphatase activity on nucleoside 5'-monophosphates. This Methylocella silvestris (strain DSM 15510 / CIP 108128 / LMG 27833 / NCIMB 13906 / BL2) protein is 5'-nucleotidase SurE.